Here is a 424-residue protein sequence, read N- to C-terminus: Putative polyketide beta-ketoacyl synthase 2 (424 aa).

Residues 13–416 (SRRAVVTGLG…GSNSALVLRR (404 aa)) enclose the Ketosynthase family 3 (KS3) domain.

This sequence belongs to the thiolase-like superfamily. Beta-ketoacyl-ACP synthases family.

Functionally, involved in developmentally regulated synthesis of a compound biosynthetically related to polyketide antibiotics which is essential for spore color in Streptomyces coelicolor. This is Putative polyketide beta-ketoacyl synthase 2 from Streptomyces coelicolor (strain ATCC BAA-471 / A3(2) / M145).